The following is a 286-amino-acid chain: Bifunctional protein FolD (286 aa).

NADP(+) contacts are provided by residues 165 to 167 (GRS), Ser-190, and Val-231.

Belongs to the tetrahydrofolate dehydrogenase/cyclohydrolase family. As to quaternary structure, homodimer.

It catalyses the reaction (6R)-5,10-methylene-5,6,7,8-tetrahydrofolate + NADP(+) = (6R)-5,10-methenyltetrahydrofolate + NADPH. It carries out the reaction (6R)-5,10-methenyltetrahydrofolate + H2O = (6R)-10-formyltetrahydrofolate + H(+). Its pathway is one-carbon metabolism; tetrahydrofolate interconversion. Functionally, catalyzes the oxidation of 5,10-methylenetetrahydrofolate to 5,10-methenyltetrahydrofolate and then the hydrolysis of 5,10-methenyltetrahydrofolate to 10-formyltetrahydrofolate. The sequence is that of Bifunctional protein FolD from Bacillus cereus (strain AH187).